The sequence spans 755 residues: 17S U2 SnRNP complex component HTATSF1 (755 aa).

Disordered regions lie at residues Met1–Asp53 and Gly81–Ser122. Ser2 is modified (N-acetylserine). The segment covering Glu90–Ser122 has biased composition (basic and acidic residues). RRM domains lie at Thr133–Phe218 and Arg264–Gly349. Residues Arg259 to Tyr353 are U2AF homology motif (UHM). The residue at position 297 (Lys297) is an N6-acetyllysine. The segment at Arg380–Glu415 is disordered. The interval Gly381–Ile755 is mediates interaction with the P-TEFb complex. 4 positions are modified to phosphoserine: Ser387, Ser403, Ser407, and Ser409. The segment covering His405 to Glu415 has biased composition (polar residues). Residues Lys429 and Lys430 each participate in a glycyl lysine isopeptide (Lys-Gly) (interchain with G-Cter in SUMO2) cross-link. Residues Lys433–Ile755 form a disordered region. Phosphoserine is present on residues Ser445, Ser452, and Ser453. Basic and acidic residues predominate over residues Cys462–Phe476. Phosphoserine occurs at positions 481, 485, 494, 498, 521, and 529. A compositionally biased stretch (basic and acidic residues) spans Leu508–Glu538. A compositionally biased stretch (acidic residues) spans Ser539 to Cys552. Over residues Ser553–Arg563 the composition is skewed to basic and acidic residues. A phosphoserine mark is found at Ser557, Ser561, and Ser579. The segment covering Glu564–Ser579 has biased composition (acidic residues). The segment covering Glu580–Lys590 has biased composition (basic and acidic residues). Over residues Glu591–Gly606 the composition is skewed to acidic residues. Residues Ser597, Ser600, Ser607, Ser616, and Ser624 each carry the phosphoserine modification. Composition is skewed to acidic residues over residues Glu613–Thr633 and Asp640–Ala651. Thr633 is modified (phosphothreonine). Position 642 is a phosphoserine (Ser642). Residues Asp652–Glu674 are compositionally biased toward basic and acidic residues. Acidic residues predominate over residues Glu675–Ser713. Ser676, Ser702, Ser713, Ser714, and Ser721 each carry phosphoserine. The segment covering Ser714 to Gly725 has biased composition (basic and acidic residues). Position 748 is a phosphoserine; by CK2 (Ser748).

Belongs to the HTATSF1 family. As to quaternary structure, component of the 17S U2 SnRNP complex, a ribonucleoprotein complex that contains small nuclear RNA (snRNA) U2 and a number of specific proteins. Within the 17S U2 SnRNP complex, interacts (via UHM region) directly with SF3B1. Component of a complex which is at least composed of HTATSF1/Tat-SF1, the P-TEFb complex components CDK9 and CCNT1, RNA polymerase II, SUPT5H, and NCL/nucleolin. Interacts with GTF2F2/RAP30 and POLR2A. Interacts with TCERG1/CA150. Interacts with (poly-ADP-ribosylated) RPA1; promoting HTATSF1 recruitment to DNA damage sites. Interacts (when phosphorylated) with TOPBP1; promoting recruitment of TOPBP1 to DNA damage sites during S-phase. Phosphorylation at Ser-748 by CK2 during S-phase in response to DNA damage promotes interaction with TOPBP1 and double-strand break (DSB) repair via homologous recombination. As to expression, widely expressed.

The protein localises to the nucleus. The protein resides in the chromosome. Functionally, component of the 17S U2 SnRNP complex of the spliceosome, a large ribonucleoprotein complex that removes introns from transcribed pre-mRNAs. The 17S U2 SnRNP complex (1) directly participates in early spliceosome assembly and (2) mediates recognition of the intron branch site during pre-mRNA splicing by promoting the selection of the pre-mRNA branch-site adenosine, the nucleophile for the first step of splicing. Within the 17S U2 SnRNP complex, HTATSF1 is required to stabilize the branchpoint-interacting stem loop. HTATSF1 is displaced from the 17S U2 SnRNP complex before the stable addition of the 17S U2 SnRNP complex to the spliceosome, destabilizing the branchpoint-interacting stem loop and allowing to probe intron branch site sequences. Also acts as a regulator of transcriptional elongation, possibly by mediating the reciprocal stimulatory effect of splicing on transcriptional elongation. Involved in double-strand break (DSB) repair via homologous recombination in S-phase by promoting the recruitment of TOPBP1 to DNA damage sites. Mechanistically, HTATSF1 is (1) recruited to DNA damage sites in S-phase via interaction with poly-ADP-ribosylated RPA1 and (2) phosphorylated by CK2, promoting recruitment of TOPBP1, thereby facilitating RAD51 nucleofilaments formation and RPA displacement, followed by homologous recombination. In terms of biological role, (Microbial infection) In case of infection by HIV-1, it is up-regulated by the HIV-1 proteins NEF and gp120, acts as a cofactor required for the Tat-enhanced transcription of the virus. The protein is 17S U2 SnRNP complex component HTATSF1 of Homo sapiens (Human).